A 275-amino-acid polypeptide reads, in one-letter code: Dermonecrotic toxin LhSicTox-alphaVI1i (275 aa).

Histidine 5 is a catalytic residue. The Mg(2+) site is built by glutamate 25 and aspartate 27. The active-site Nucleophile is histidine 41. Disulfide bonds link cysteine 45/cysteine 51 and cysteine 47/cysteine 192. Aspartate 85 lines the Mg(2+) pocket.

This sequence belongs to the arthropod phospholipase D family. Class II subfamily. It depends on Mg(2+) as a cofactor. As to expression, expressed by the venom gland.

It localises to the secreted. It catalyses the reaction an N-(acyl)-sphingosylphosphocholine = an N-(acyl)-sphingosyl-1,3-cyclic phosphate + choline. The enzyme catalyses an N-(acyl)-sphingosylphosphoethanolamine = an N-(acyl)-sphingosyl-1,3-cyclic phosphate + ethanolamine. The catalysed reaction is a 1-acyl-sn-glycero-3-phosphocholine = a 1-acyl-sn-glycero-2,3-cyclic phosphate + choline. It carries out the reaction a 1-acyl-sn-glycero-3-phosphoethanolamine = a 1-acyl-sn-glycero-2,3-cyclic phosphate + ethanolamine. Functionally, dermonecrotic toxins cleave the phosphodiester linkage between the phosphate and headgroup of certain phospholipids (sphingolipid and lysolipid substrates), forming an alcohol (often choline) and a cyclic phosphate. This toxin acts on sphingomyelin (SM). It may also act on ceramide phosphoethanolamine (CPE), lysophosphatidylcholine (LPC) and lysophosphatidylethanolamine (LPE), but not on lysophosphatidylserine (LPS), and lysophosphatidylglycerol (LPG). It acts by transphosphatidylation, releasing exclusively cyclic phosphate products as second products. Induces dermonecrosis, hemolysis, increased vascular permeability, edema, inflammatory response, and platelet aggregation. The sequence is that of Dermonecrotic toxin LhSicTox-alphaVI1i from Loxosceles hirsuta (Recluse spider).